Reading from the N-terminus, the 200-residue chain is Small heat shock protein hspG2 (200 aa).

Residues 33 to 200 (NKRIDIIPSM…DNFQIKLKSI (168 aa)) enclose the sHSP domain. Positions 86 to 139 (KLQQQQQQQSEKSSQSTNNKDDDEPSIEEYEDDTKLKSNLNKNTENKDENKTTS) are disordered. The segment covering 88–101 (QQQQQQQSEKSSQS) has biased composition (low complexity). Positions 106–117 (DDDEPSIEEYED) are enriched in acidic residues.

It belongs to the small heat shock protein (HSP20) family.

The protein is Small heat shock protein hspG2 (hspG2) of Dictyostelium discoideum (Social amoeba).